We begin with the raw amino-acid sequence, 347 residues long: Peptidoglycan recognition protein 3 (347 aa).

Positions 1–26 are cleaved as a signal peptide; the sequence is MLVSWDHPKMLPRLLGFLALSLLACG. 2 N-acetylmuramoyl-L-alanine amidase domains span residues 77 to 185 and 206 to 328; these read LQSQ…KACP and PAKF…VSNI. The N-linked (GlcNAc...) asparagine glycan is linked to asparagine 120. 3 disulfide bridges follow: cysteine 184-cysteine 306, cysteine 200-cysteine 244, and cysteine 220-cysteine 226. Peptidoglycan-binding residues include histidine 237 and tyrosine 248. An interaction with murein region spans residues 270–275; that stretch reads HTYGYN.

This sequence belongs to the N-acetylmuramoyl-L-alanine amidase 2 family. Monomer. Homodimer; disulfide-linked. Heterodimer with PGLYRP4; disulfide-linked. Detected in lung, spleen and stomach, and at low levels in eye, heart, thymus and testis.

Its subcellular location is the secreted. Pattern receptor that binds to murein peptidoglycans (PGN) of Gram-positive bacteria. Has bactericidal activity towards Gram-positive bacteria. May kill Gram-positive bacteria by interfering with peptidoglycan biosynthesis. Also binds to Gram-negative bacteria, and has bacteriostatic activity towards Gram-negative bacteria. Plays a role in innate immunity. This is Peptidoglycan recognition protein 3 (Pglyrp3) from Mus musculus (Mouse).